We begin with the raw amino-acid sequence, 192 residues long: Adenylate kinase (192 aa).

10–18 (GVPGVGKTT) is an ATP binding site.

It belongs to the archaeal adenylate kinase family.

The protein resides in the cytoplasm. It carries out the reaction AMP + ATP = 2 ADP. The polypeptide is Adenylate kinase (Methanoculleus marisnigri (strain ATCC 35101 / DSM 1498 / JR1)).